A 648-amino-acid chain; its full sequence is 1-deoxy-D-xylulose-5-phosphate synthase (648 aa).

Residues histidine 73 and 114-116 each bind thiamine diphosphate; that span reads SHA. A Mg(2+)-binding site is contributed by aspartate 145. Thiamine diphosphate contacts are provided by residues 146 to 147, asparagine 175, tyrosine 286, and glutamate 367; that span reads GA. Asparagine 175 contributes to the Mg(2+) binding site.

Belongs to the transketolase family. DXPS subfamily. As to quaternary structure, homodimer. Mg(2+) serves as cofactor. Requires thiamine diphosphate as cofactor.

The catalysed reaction is D-glyceraldehyde 3-phosphate + pyruvate + H(+) = 1-deoxy-D-xylulose 5-phosphate + CO2. The protein operates within metabolic intermediate biosynthesis; 1-deoxy-D-xylulose 5-phosphate biosynthesis; 1-deoxy-D-xylulose 5-phosphate from D-glyceraldehyde 3-phosphate and pyruvate: step 1/1. In terms of biological role, catalyzes the acyloin condensation reaction between C atoms 2 and 3 of pyruvate and glyceraldehyde 3-phosphate to yield 1-deoxy-D-xylulose-5-phosphate (DXP). This Rhodococcus erythropolis (strain PR4 / NBRC 100887) protein is 1-deoxy-D-xylulose-5-phosphate synthase.